The chain runs to 89 residues: Abortive infection protein (89 aa).

The protein localises to the cell membrane. Functionally, ABI may interact with a target in the cell membrane, which could be the product of the host's cmrA gene, and cause disruption of the cellular membrane such that lysis of the infected cell and death of the infecting phage would result. This is Abortive infection protein (abi) from Escherichia coli.